A 225-amino-acid chain; its full sequence is NAD(P)H-quinone oxidoreductase subunit K, chloroplastic (225 aa).

Positions 43, 44, 108, and 139 each coordinate [4Fe-4S] cluster.

It belongs to the complex I 20 kDa subunit family. NDH is composed of at least 16 different subunits, 5 of which are encoded in the nucleus. [4Fe-4S] cluster serves as cofactor.

It is found in the plastid. The protein resides in the chloroplast thylakoid membrane. It carries out the reaction a plastoquinone + NADH + (n+1) H(+)(in) = a plastoquinol + NAD(+) + n H(+)(out). The catalysed reaction is a plastoquinone + NADPH + (n+1) H(+)(in) = a plastoquinol + NADP(+) + n H(+)(out). Functionally, NDH shuttles electrons from NAD(P)H:plastoquinone, via FMN and iron-sulfur (Fe-S) centers, to quinones in the photosynthetic chain and possibly in a chloroplast respiratory chain. The immediate electron acceptor for the enzyme in this species is believed to be plastoquinone. Couples the redox reaction to proton translocation, and thus conserves the redox energy in a proton gradient. The polypeptide is NAD(P)H-quinone oxidoreductase subunit K, chloroplastic (Fagopyrum esculentum subsp. ancestrale (Wild buckwheat)).